Here is a 124-residue protein sequence, read N- to C-terminus: UPF0102 protein HEAR0176 (124 aa).

This sequence belongs to the UPF0102 family.

This Herminiimonas arsenicoxydans protein is UPF0102 protein HEAR0176.